Reading from the N-terminus, the 256-residue chain is Thiazole synthase (256 aa).

The active-site Schiff-base intermediate with DXP is Lys-96. 1-deoxy-D-xylulose 5-phosphate is bound by residues Gly-157, 183–184, and 205–206; these read AG and NT.

It belongs to the ThiG family. Homotetramer. Forms heterodimers with either ThiH or ThiS.

It is found in the cytoplasm. It catalyses the reaction [ThiS sulfur-carrier protein]-C-terminal-Gly-aminoethanethioate + 2-iminoacetate + 1-deoxy-D-xylulose 5-phosphate = [ThiS sulfur-carrier protein]-C-terminal Gly-Gly + 2-[(2R,5Z)-2-carboxy-4-methylthiazol-5(2H)-ylidene]ethyl phosphate + 2 H2O + H(+). It participates in cofactor biosynthesis; thiamine diphosphate biosynthesis. In terms of biological role, catalyzes the rearrangement of 1-deoxy-D-xylulose 5-phosphate (DXP) to produce the thiazole phosphate moiety of thiamine. Sulfur is provided by the thiocarboxylate moiety of the carrier protein ThiS. In vitro, sulfur can be provided by H(2)S. This is Thiazole synthase from Clostridium beijerinckii (strain ATCC 51743 / NCIMB 8052) (Clostridium acetobutylicum).